The primary structure comprises 352 residues: Speedy protein E18 (352 aa).

The span at 1–12 (MDRTKTRFRKRG) shows a compositional bias: basic residues. The segment at 1–90 (MDRTKTRFRK…EPEKELAPEP (90 aa)) is disordered. Residues 16–39 (GKITTSRQPHPQNEQSLQRSTSGY) show a composition bias toward polar residues. Positions 76–90 (DESEEEPEKELAPEP) are enriched in acidic residues.

It belongs to the Speedy/Ringo family.

This chain is Speedy protein E18, found in Homo sapiens (Human).